The primary structure comprises 218 residues: Probable transaldolase (218 aa).

K87 serves as the catalytic Schiff-base intermediate with substrate.

The protein belongs to the transaldolase family. Type 3B subfamily.

It is found in the cytoplasm. It carries out the reaction D-sedoheptulose 7-phosphate + D-glyceraldehyde 3-phosphate = D-erythrose 4-phosphate + beta-D-fructose 6-phosphate. It participates in carbohydrate degradation; pentose phosphate pathway; D-glyceraldehyde 3-phosphate and beta-D-fructose 6-phosphate from D-ribose 5-phosphate and D-xylulose 5-phosphate (non-oxidative stage): step 2/3. Transaldolase is important for the balance of metabolites in the pentose-phosphate pathway. The chain is Probable transaldolase from Bacteroides fragilis (strain YCH46).